The primary structure comprises 399 residues: Enolase (399 aa).

Residue glutamine 149 participates in (2R)-2-phosphoglycerate binding. Glutamate 191 functions as the Proton donor in the catalytic mechanism. Positions 227, 268, and 293 each coordinate Mg(2+). Residues lysine 318, arginine 347, serine 348, and lysine 369 each contribute to the (2R)-2-phosphoglycerate site. The active-site Proton acceptor is the lysine 318.

The protein belongs to the enolase family. Mg(2+) is required as a cofactor.

Its subcellular location is the cytoplasm. It localises to the secreted. The protein localises to the cell surface. It catalyses the reaction (2R)-2-phosphoglycerate = phosphoenolpyruvate + H2O. It participates in carbohydrate degradation; glycolysis; pyruvate from D-glyceraldehyde 3-phosphate: step 4/5. Catalyzes the reversible conversion of 2-phosphoglycerate (2-PG) into phosphoenolpyruvate (PEP). It is essential for the degradation of carbohydrates via glycolysis. The polypeptide is Enolase (Archaeoglobus fulgidus (strain ATCC 49558 / DSM 4304 / JCM 9628 / NBRC 100126 / VC-16)).